We begin with the raw amino-acid sequence, 229 residues long: Secreted RxLR effector protein PITG_22926 (229 aa).

An N-terminal signal peptide occupies residues 1-23; that stretch reads MRCNHTLCVVAITFLVSWSQTLS. A RxLR-dEER motif is present at residues 34-45; it reads PLVRSVSATEER.

It belongs to the RxLR effector family.

The protein resides in the secreted. Its subcellular location is the host nucleus. In terms of biological role, secreted effector that acts as a RNA silencing suppressor, probably by inhibiting the biogenesis of small RNAs in the host plant, to manipulate host immune responses and promote Phytophthora infection. This Phytophthora infestans (strain T30-4) (Potato late blight agent) protein is Secreted RxLR effector protein PITG_22926.